Here is a 459-residue protein sequence, read N- to C-terminus: MSFNFIKDKDKKIHFIGIGGISMSGLAAVLLNSGYSVSGSDFKDSAIIDKLRSSGAEIYIGHRRENINNVDLVVYTAAIPSDNPELLEAKEKNIALMDRAEFLGQIMKGHKYSVAISGTHGKTTCTSMLSHITLADNLDPTILVGGELDAIGGNFRIGNSEYFLTEACEYKRSFLKFPPYVGIILNIDSDHLDYYKDIDEIADTFLQFSRLIPEDGYLVGYADDQRVNEILSETNCNTLSYGFSDNANLTAKNIHFNTNGCATFDVYKDGNNLFNITLNVPGKHNILNALASICVSLIFNISNDCIIEGLSNCKGAHKRFEYKGKLNGVTVIDDYAHHPTEIKATLSTAKQMNHNKTYCIFQPHTYTRTKALFDEFTECFNDADELILMDIYAAREKNTGLVSSDELGDALRNKGLKCINVHSHDEALNYVKSKLVSGDLLLTVGAGDVVIVGEKYLKA.

118 to 124 (GTHGKTT) provides a ligand contact to ATP.

The protein belongs to the MurCDEF family.

It is found in the cytoplasm. It catalyses the reaction UDP-N-acetyl-alpha-D-muramate + L-alanine + ATP = UDP-N-acetyl-alpha-D-muramoyl-L-alanine + ADP + phosphate + H(+). Its pathway is cell wall biogenesis; peptidoglycan biosynthesis. In terms of biological role, cell wall formation. The protein is UDP-N-acetylmuramate--L-alanine ligase of Clostridium beijerinckii (strain ATCC 51743 / NCIMB 8052) (Clostridium acetobutylicum).